The sequence spans 562 residues: RNA N(6)-adenosine-methyltransferase METTL16 (562 aa).

The tract at residues 17-20 (PPDF) is RNA-binding. The S-adenosyl-L-methionine site is built by arginine 82, glycine 110, serine 114, glutamate 133, threonine 164, and asparagine 184. The K-loop stretch occupies residues 163-167 (KTLLM). RNA-binding regions lie at residues 199 to 211 (SRNP…SSVN), 250 to 254 (GKKCS), and 277 to 283 (QGRTMRW). Positions 289-400 (FYDDVTVPSP…QLREVPRAPE (112 aa)) are VCR 1. The residue at position 329 (serine 329) is a Phosphoserine. The span at 402 to 413 (VIQALEEKKPTP) shows a compositional bias: basic and acidic residues. The disordered stretch occupies residues 402-498 (VIQALEEKKP…DQEASEQFGS (97 aa)). Positions 458–467 (ENPEPTEDER) are enriched in acidic residues. Residue threonine 463 is modified to Phosphothreonine. Positions 480-496 (CQGSSNGAQDQEASEQF) are enriched in polar residues. The tract at residues 514 to 562 (YLFKCLINVKKEVDDALVEMHWVEGQNRDLMNQLCTYIRNQIFRLVAVN) is VCR 2.

Belongs to the methyltransferase superfamily. METTL16/RlmF family. As to quaternary structure, interacts with MEPCE. Interacts with LARP7.

The protein localises to the nucleus. It localises to the cytoplasm. The catalysed reaction is adenosine in U6 snRNA + S-adenosyl-L-methionine = N(6)-methyladenosine in U6 snRNA + S-adenosyl-L-homocysteine + H(+). It carries out the reaction an adenosine in mRNA + S-adenosyl-L-methionine = an N(6)-methyladenosine in mRNA + S-adenosyl-L-homocysteine + H(+). With respect to regulation, methyltransferase activity is autoinhibited by the K-loop region that blocks S-adenosyl-L-methionine-binding. Upon activation, K-loop changes conformation, allowing S-adenosyl-L-methionine-binding and subsequent methyltransferase activity. mRNA N6-adenosine-methyltransferase activity is inhibited by zinc. Its function is as follows. RNA N6-methyltransferase that methylates adenosine residues at the N(6) position of a subset of RNAs and is involved in S-adenosyl-L-methionine homeostasis by regulating expression of MAT2A transcripts. Able to N6-methylate a subset of mRNAs and U6 small nuclear RNAs (U6 snRNAs). In contrast to the METTL3-METTL14 heterodimer, only able to methylate a limited number of RNAs: requires both a 5'UACAGAGAA-3' nonamer sequence and a specific RNA structure. Plays a key role in S-adenosyl-L-methionine homeostasis by mediating N6-methylation of MAT2A mRNAs, altering splicing of MAT2A transcripts: in presence of S-adenosyl-L-methionine, binds the 3'-UTR region of MAT2A mRNA and specifically N6-methylates the first hairpin of MAT2A mRNA, preventing recognition of their 3'-splice site by U2AF1/U2AF35, thereby inhibiting splicing and protein production of S-adenosylmethionine synthase. In S-adenosyl-L-methionine-limiting conditions, binds the 3'-UTR region of MAT2A mRNA but stalls due to the lack of a methyl donor, preventing N6-methylation and promoting expression of MAT2A. In addition to mRNAs, also able to mediate N6-methylation of U6 small nuclear RNA (U6 snRNA): specifically N6-methylates adenine in position 43 of U6 snRNAs. Also able to bind various lncRNAs, such as 7SK snRNA (7SK RNA) or 7SL RNA. Specifically binds the 3'-end of the MALAT1 long non-coding RNA. The chain is RNA N(6)-adenosine-methyltransferase METTL16 from Homo sapiens (Human).